Reading from the N-terminus, the 782-residue chain is ATP-dependent 6-phosphofructokinase, muscle type (782 aa).

An N-acetylthreonine modification is found at threonine 2. Residues 2-390 (THEEHHAAKT…NWEVYKLLAH (389 aa)) form an N-terminal catalytic PFK domain 1 region. Residues glycine 25, 88–89 (RC), and 118–121 (GDGS) each bind ATP. Aspartate 119 lines the Mg(2+) pocket. Residue serine 133 is modified to Phosphoserine. Residues 164 to 166 (SID), arginine 201, 208 to 210 (MGR), glutamate 264, arginine 292, and 298 to 301 (HVQR) each bind substrate. Aspartate 166 acts as the Proton acceptor in catalysis. The residue at position 377 (serine 377) is a Phosphoserine. The tract at residues 391–403 (IRPPVSKTSATMH) is interdomain linker. A C-terminal regulatory PFK domain 2 region spans residues 404-782 (TVAVMNVGAP…SRKRSGETSI (379 aa)). Beta-D-fructose 2,6-bisphosphate-binding positions include arginine 473 and 530–534 (TVSNN). Serine 532 carries O-linked (GlcNAc) serine glycosylation. At lysine 559 the chain carries N6-(2-hydroxyisobutyryl)lysine. Beta-D-fructose 2,6-bisphosphate is bound by residues arginine 568, 575 to 577 (MGG), glutamate 631, arginine 657, and 663 to 666 (HMQQ). Serine 669 carries the phosphoserine modification. Arginine 737 is a binding site for beta-D-fructose 2,6-bisphosphate. Residue serine 777 is modified to Phosphoserine.

It belongs to the phosphofructokinase type A (PFKA) family. ATP-dependent PFK group I subfamily. Eukaryotic two domain clade 'E' sub-subfamily. In terms of assembly, homo- and heterotetramers. Phosphofructokinase (PFK) enzyme functions as a tetramer composed of different combinations of 3 types of subunits, called PFKM (M), PFKL (L) and PFKP (P). The composition of the PFK tetramer differs according to the tissue type it is present in. The kinetic and regulatory properties of the tetrameric enzyme are dependent on the subunit composition, hence can vary across tissues. Interacts (via C-terminus) with HK1 (via N-terminal spermatogenic cell-specific region). It depends on Mg(2+) as a cofactor. In terms of processing, glcNAcylation decreases enzyme activity.

It localises to the cytoplasm. It catalyses the reaction beta-D-fructose 6-phosphate + ATP = beta-D-fructose 1,6-bisphosphate + ADP + H(+). It functions in the pathway carbohydrate degradation; glycolysis; D-glyceraldehyde 3-phosphate and glycerone phosphate from D-glucose: step 3/4. Its activity is regulated as follows. Allosterically activated by ADP, AMP, or fructose 2,6-bisphosphate, and allosterically inhibited by ATP or citrate. Its function is as follows. Catalyzes the phosphorylation of D-fructose 6-phosphate to fructose 1,6-bisphosphate by ATP, the first committing step of glycolysis. The chain is ATP-dependent 6-phosphofructokinase, muscle type (PFKM) from Canis lupus familiaris (Dog).